The sequence spans 157 residues: Transcription elongation factor GreA (157 aa).

The segment at 1 to 24 (MDKFPMTPEGYHALDEELKRRQQE) is disordered. Over residues 12 to 24 (HALDEELKRRQQE) the composition is skewed to basic and acidic residues. Residues 53 to 73 (EAQSLNEGRIAELEDKLSRAE) adopt a coiled-coil conformation.

It belongs to the GreA/GreB family.

In terms of biological role, necessary for efficient RNA polymerase transcription elongation past template-encoded arresting sites. The arresting sites in DNA have the property of trapping a certain fraction of elongating RNA polymerases that pass through, resulting in locked ternary complexes. Cleavage of the nascent transcript by cleavage factors such as GreA or GreB allows the resumption of elongation from the new 3'terminus. GreA releases sequences of 2 to 3 nucleotides. The polypeptide is Transcription elongation factor GreA (Beijerinckia indica subsp. indica (strain ATCC 9039 / DSM 1715 / NCIMB 8712)).